We begin with the raw amino-acid sequence, 247 residues long: Phosphoglycerate mutase 1 (247 aa).

Substrate is bound by residues 8–15 and 21–22; these read RHGQSEWN and TG. Histidine 9 serves as the catalytic Tele-phosphohistidine intermediate. Serine 12 is modified (phosphoserine). Lysine 31 is covalently cross-linked (Glycyl lysine isopeptide (Lys-Gly) (interchain with G-Cter in ubiquitin)). Position 49 is a phosphotyrosine (tyrosine 49). Lysine 57 participates in a covalent cross-link: Glycyl lysine isopeptide (Lys-Gly) (interchain with G-Cter in ubiquitin). Arginine 60 provides a ligand contact to substrate. A Glycyl lysine isopeptide (Lys-Gly) (interchain with G-Cter in ubiquitin) cross-link involves residue lysine 71. Residue glutamate 87 is the Proton donor/acceptor of the active site. Substrate-binding positions include 87–90, lysine 98, and 114–115; these read ERHY and RR. Serine 116, serine 127, and serine 128 each carry phosphoserine. Glycyl lysine isopeptide (Lys-Gly) (interchain with G-Cter in ubiquitin) cross-links involve residues lysine 139 and lysine 175. 183 to 184 lines the substrate pocket; sequence GN. Serine 185 bears the Phosphoserine mark. Residue lysine 191 forms a Glycyl lysine isopeptide (Lys-Gly) (interchain with G-Cter in ubiquitin) linkage. Residue serine 197 is modified to Phosphoserine.

It belongs to the phosphoglycerate mutase family. BPG-dependent PGAM subfamily. As to quaternary structure, homotetramer: dimer of dimers.

The protein resides in the cytoplasm. Its subcellular location is the mitochondrion outer membrane. The protein localises to the mitochondrion intermembrane space. It carries out the reaction (2R)-2-phosphoglycerate = (2R)-3-phosphoglycerate. It participates in carbohydrate degradation; glycolysis; pyruvate from D-glyceraldehyde 3-phosphate: step 3/5. With respect to regulation, inhibited by inositol hexakisphosphate and benzene tri-, tetra- and hexacarboxylates. Functionally, interconversion of 3- and 2-phosphoglycerate with 2,3-bisphosphoglycerate as the primer of the reaction. Can also catalyze the reaction of EC 5.4.2.4 (synthase), but with a reduced activity. The protein is Phosphoglycerate mutase 1 (GPM1) of Saccharomyces cerevisiae (strain ATCC 204508 / S288c) (Baker's yeast).